Reading from the N-terminus, the 96-residue chain is U-reduvitoxin-Pr12a (96 aa).

The first 20 residues, 1–20 (MKTALLLFFALVFIAFETEA), serve as a signal peptide directing secretion. 3 disulfide bridges follow: Cys-21/Cys-38, Cys-33/Cys-53, and Cys-36/Cys-47. Pacifastin domains are found at residues 21-55 (CRPG…ICPP) and 59-94 (KLEC…CIHK). A pro-Pro-Arg motif necessary for proteolytic processing region spans residues 54-56 (PPR). 3 disulfides stabilise this stretch: Cys-62/Cys-77, Cys-72/Cys-91, and Cys-75/Cys-86.

Belongs to the protease inhibitor I19 family. As to expression, expressed by the venom gland.

It localises to the secreted. Inhibits trypsin activity and prophenoloxidase (PPO) activation, an enzyme essential for both clotting and insect innate immune responses. It does not inhibit activity of chymotrypsin and protease K, and has no effect on phenoloxidase (PO) activity. This is U-reduvitoxin-Pr12a from Platymeris rhadamanthus (Red spot assassin bug).